A 100-amino-acid chain; its full sequence is Urease subunit gamma (100 aa).

The protein belongs to the urease gamma subunit family. As to quaternary structure, heterotrimer of UreA (gamma), UreB (beta) and UreC (alpha) subunits. Three heterotrimers associate to form the active enzyme.

The protein localises to the cytoplasm. The enzyme catalyses urea + 2 H2O + H(+) = hydrogencarbonate + 2 NH4(+). Its pathway is nitrogen metabolism; urea degradation; CO(2) and NH(3) from urea (urease route): step 1/1. In Synechococcus sp. (strain CC9902), this protein is Urease subunit gamma.